Reading from the N-terminus, the 743-residue chain is tRNA(Met) cytidine acetyltransferase TmcA (743 aa).

ATP-binding positions include Q216, 241–250, and R390; that span reads GRGKSASIGL. In terms of domain architecture, N-acetyltransferase spans 420 to 604; sequence LKIEDVSQEE…YSVIVIRALS (185 aa). Residues 531 to 533 and 538 to 544 each bind acetyl-CoA; these read IAV and QGKGIGS.

The protein belongs to the RNA cytidine acetyltransferase family. TmcA subfamily.

Its subcellular location is the cytoplasm. The catalysed reaction is cytidine(34) in elongator tRNA(Met) + acetyl-CoA + ATP + H2O = N(4)-acetylcytidine(34) in elongator tRNA(Met) + ADP + phosphate + CoA + H(+). Functionally, catalyzes the formation of N(4)-acetylcytidine (ac(4)C) at the wobble position of tRNA(Met), by using acetyl-CoA as an acetyl donor and ATP (or GTP). This chain is tRNA(Met) cytidine acetyltransferase TmcA, found in Saccharolobus islandicus (strain Y.G.57.14 / Yellowstone #1) (Sulfolobus islandicus).